Here is a 159-residue protein sequence, read N- to C-terminus: CASP-like protein 5C1 (159 aa).

At 1-6 (MDNGDR) the chain is on the cytoplasmic side. Residues 7–29 (SGAGAGAVGSAGSLGLRVGQAVF) form a helical membrane-spanning segment. At 30 to 48 (SSASLLFMSVGVEFFSYTA) the chain is on the extracellular side. The helical transmembrane segment at 49 to 69 (FCFLVTIMGLVIPWSCTLAMI) threads the bilayer. Residues 70–94 (DVYSVFVGCPLRVPGVMVIVVVGDC) are Cytoplasmic-facing. The chain crosses the membrane as a helical span at residues 95-117 (ALSIVSFAAACSSAAVIDLLLQL). The Extracellular portion of the chain corresponds to 118–134 (HGSHSSPTFCGRYQLSA). A helical membrane pass occupies residues 135–155 (MMAFLSWLLMAASATFNLWFV). The Cytoplasmic portion of the chain corresponds to 156–159 (ASRW).

The protein belongs to the Casparian strip membrane proteins (CASP) family. In terms of assembly, homodimer and heterodimers.

Its subcellular location is the cell membrane. The sequence is that of CASP-like protein 5C1 from Zea mays (Maize).